Reading from the N-terminus, the 614-residue chain is Major facilitator superfamily domain-containing protein 6-like protein B (614 aa).

The next 2 helical transmembrane spans lie at 41–61 (LGLG…VHLL) and 78–98 (FFIM…AFYP). Residues 177-191 (HQRFTDQFPSSSPLT) are compositionally biased toward polar residues. The segment at 177-243 (HQRFTDQFPS…PFATHPNVSH (67 aa)) is disordered. Low complexity predominate over residues 205-227 (GSGKAQKANSSKSSASNSKQRSS). 9 helical membrane-spanning segments follow: residues 270–290 (IFLI…PLEW), 312–332 (LWIW…FLID), 345–365 (VSFH…LSTL), 393–413 (IVLT…IQNF), 425–445 (ELYM…LYFF), 457–477 (WMVV…SFLW), 480–500 (WSVV…WWAI), 520–540 (LRWL…GFII), and 546–566 (AVLY…FLLV).

This sequence belongs to the major facilitator superfamily. MFSD6 family.

Its subcellular location is the membrane. In Xenopus laevis (African clawed frog), this protein is Major facilitator superfamily domain-containing protein 6-like protein B (mfsd6l-b).